The sequence spans 288 residues: Cyclin-dependent kinase 2 homolog (288 aa).

The region spanning 4–284 (YHGLEKIGEG…AKEALQHAYF (281 aa)) is the Protein kinase domain. Residues 10–18 (IGEGTYGVV) and Lys32 each bind ATP. The residue at position 14 (Thr14) is a Phosphothreonine. Tyr15 is modified (phosphotyrosine). Asp125 serves as the catalytic Proton acceptor. Thr158 carries the post-translational modification Phosphothreonine.

The protein belongs to the protein kinase superfamily. CMGC Ser/Thr protein kinase family. CDC2/CDKX subfamily. May form a complex composed of at least the catalytic subunit CRK2 and a cyclin. It depends on Mg(2+) as a cofactor.

The protein localises to the cytoplasm. It catalyses the reaction L-seryl-[protein] + ATP = O-phospho-L-seryl-[protein] + ADP + H(+). The enzyme catalyses L-threonyl-[protein] + ATP = O-phospho-L-threonyl-[protein] + ADP + H(+). The catalysed reaction is [DNA-directed RNA polymerase] + ATP = phospho-[DNA-directed RNA polymerase] + ADP + H(+). Its activity is regulated as follows. Phosphorylation at Thr-14 or Tyr-15 inactivates the enzyme, while phosphorylation at Thr-158 activates it. In terms of biological role, serine/threonine-protein kinase. Involved in the control of the cell cycle. Required for entry into S-phase and mitosis. Probable component of the kinase complex that phosphorylates the repetitive C-terminus of RNA polymerase II. The polypeptide is Cyclin-dependent kinase 2 homolog (Plasmodium knowlesi (strain H)).